Consider the following 1276-residue polypeptide: Probable outer membrane protein pmp6 (1276 aa).

Positions 1–23 (MKYSLPWLLTSSALVFSLHPLMA) are cleaved as a signal peptide. The 296-residue stretch at 981-1276 (DAPSHPGIWI…NANCGTRYSF (296 aa)) folds into the Autotransporter domain.

It belongs to the PMP outer membrane protein family.

It is found in the secreted. Its subcellular location is the cell wall. The protein localises to the cell outer membrane. The protein is Probable outer membrane protein pmp6 (pmp6) of Chlamydia pneumoniae (Chlamydophila pneumoniae).